The primary structure comprises 292 residues: Short chain dehydrogenase/reductase CPUR_05418 (292 aa).

Residues Ile-44 and Arg-156 each coordinate NADP(+). Residues Ser-172 and Tyr-186 each act as proton donor in the active site. NADP(+) is bound by residues Tyr-186, Lys-190, Ile-221, and Thr-223. Lys-190 (lowers pKa of active site Tyr) is an active-site residue.

Belongs to the short-chain dehydrogenases/reductases (SDR) family.

The protein operates within secondary metabolite biosynthesis. In terms of biological role, short chain dehydrogenase/reductase; part of the ergochrome gene cluster responsible for the typical purple-black color of the ergot sclerotia. The ergochrome gene cluster produces several ergot pigments including the yellow ergochrome secalonic acid and its derivatives, as well as the red anthraquinones endocrocin and clavorubin. The pathway begins with the synthesis of atrochrysone thioester by the polyketide synthase (PKS) CPUR_05437. The atrochrysone carboxyl ACP thioesterase CPUR_05436 then breaks the thioester bond and releases the atrochrysone carboxylic acid from CPUR_05437. The atrochrysone carboxylic acid is then converted to atrochrysone which is further transformed into emodin anthrone. The next step is performed by the anthrone oxygenase CPUR_05434 that catalyzes the oxidation of emodinanthrone to emodin. Emodin is further modified to yield monodictyphenone via several steps involving CPUR_05427, CPUR_05428, CPUR_05429 and CPUR_05430. The short chain dehydrogenase/reductase CPUR_05418 then catalyzes the C-5 ketoreduction to give the xanthone skeleton of the monomeric units. Ergochromes formation requires further dimerization steps of different xanthone units, probably catalyzed by the cytochrome P450 monooxygenase CPUR_05419. CPUR_05425, CPUR_05426 and CPUR_05431 are unique to Claviceps, thus it is likely that they are involved in further modification of xanthone units or in their dimerization. The yellow ergochromes and the red anthraquinone pigments endocrocin and clavorubin are products from the same PKS derived precursors and the latter are likely shunt products in the pathway of xanthone biosynthesis. It is proposed that atrochrysone carboxylic acid released from the PKS CPUR_05437 can also be converted to endocrocin anthrone which is further oxidized into endocrocin by CPUR_05435. Endocrocin could be then modified to clavorubin, possibly by CPUR_05423 and CPUR_05431. Clavorubin is the principal anthraquinone metabolite produced by the cluster with a much higher yield compared to endocrocin. This Claviceps purpurea (strain 20.1) (Ergot fungus) protein is Short chain dehydrogenase/reductase CPUR_05418.